Reading from the N-terminus, the 298-residue chain is Zinc import ATP-binding protein ZnuC (298 aa).

The 216-residue stretch at 17 to 232 (IELRNAGVYR…PEYVRLFGSR (216 aa)) folds into the ABC transporter domain. 49–56 (GPNGAGKS) is an ATP binding site. The disordered stretch occupies residues 273–298 (RGHCHVEDGHHHDHEHHHHEGGQPRA). The span at 276-298 (CHVEDGHHHDHEHHHHEGGQPRA) shows a compositional bias: basic and acidic residues.

The protein belongs to the ABC transporter superfamily. Zinc importer (TC 3.A.1.15.5) family. As to quaternary structure, the complex is composed of two ATP-binding proteins (ZnuC), two transmembrane proteins (ZnuB) and a solute-binding protein (ZnuA).

The protein resides in the cell inner membrane. It carries out the reaction Zn(2+)(out) + ATP(in) + H2O(in) = Zn(2+)(in) + ADP(in) + phosphate(in) + H(+)(in). Its function is as follows. Part of the ABC transporter complex ZnuABC involved in zinc import. Responsible for energy coupling to the transport system. The protein is Zinc import ATP-binding protein ZnuC of Brucella suis biovar 1 (strain 1330).